The primary structure comprises 409 residues: Arginine deiminase (409 aa).

Catalysis depends on cysteine 399, which acts as the Amidino-cysteine intermediate.

The protein belongs to the arginine deiminase family.

Its subcellular location is the cytoplasm. The enzyme catalyses L-arginine + H2O = L-citrulline + NH4(+). The protein operates within amino-acid degradation; L-arginine degradation via ADI pathway; carbamoyl phosphate from L-arginine: step 1/2. This is Arginine deiminase from Streptococcus gordonii (strain Challis / ATCC 35105 / BCRC 15272 / CH1 / DL1 / V288).